A 198-amino-acid chain; its full sequence is Transcription factor elt-7 (198 aa).

The span at 1–18 (MLPETTTLQPLPSVTTIM) shows a compositional bias: polar residues. A disordered region spans residues 1–20 (MLPETTTLQPLPSVTTIMNE). The GATA-type zinc-finger motif lies at 143 to 167 (CSHCSTTTTTLWRKNDEGNLECNAC).

Its subcellular location is the nucleus. Functionally, transcriptional activator that binds to the consensus sequence 5'-[AT]GATA[AG]-3'. Required for gut-specific differentiation, specifically acting with the GATA region-binding transcription factor elt-2 to control normal gene expression and promote normal formation of the intestine. May have a protective role in response to infection by Gram-negative bacteria such as P.aeruginosa. This is Transcription factor elt-7 from Caenorhabditis elegans.